A 417-amino-acid polypeptide reads, in one-letter code: Serine hydroxymethyltransferase (417 aa).

(6S)-5,6,7,8-tetrahydrofolate contacts are provided by residues L121 and 125–127 (GHL). At K229 the chain carries N6-(pyridoxal phosphate)lysine. 355–357 (SPF) serves as a coordination point for (6S)-5,6,7,8-tetrahydrofolate.

It belongs to the SHMT family. As to quaternary structure, homodimer. Pyridoxal 5'-phosphate serves as cofactor.

The protein localises to the cytoplasm. It carries out the reaction (6R)-5,10-methylene-5,6,7,8-tetrahydrofolate + glycine + H2O = (6S)-5,6,7,8-tetrahydrofolate + L-serine. Its pathway is one-carbon metabolism; tetrahydrofolate interconversion. It functions in the pathway amino-acid biosynthesis; glycine biosynthesis; glycine from L-serine: step 1/1. Catalyzes the reversible interconversion of serine and glycine with tetrahydrofolate (THF) serving as the one-carbon carrier. This reaction serves as the major source of one-carbon groups required for the biosynthesis of purines, thymidylate, methionine, and other important biomolecules. Also exhibits THF-independent aldolase activity toward beta-hydroxyamino acids, producing glycine and aldehydes, via a retro-aldol mechanism. This Aeromonas hydrophila subsp. hydrophila (strain ATCC 7966 / DSM 30187 / BCRC 13018 / CCUG 14551 / JCM 1027 / KCTC 2358 / NCIMB 9240 / NCTC 8049) protein is Serine hydroxymethyltransferase.